Reading from the N-terminus, the 399-residue chain is Leu/Ile/Val-binding protein homolog 7 (399 aa).

Residues M1–A22 form the signal peptide.

Belongs to the leucine-binding protein family.

Functionally, component of an amino-acid transport system. This is Leu/Ile/Val-binding protein homolog 7 from Brucella melitensis biotype 1 (strain ATCC 23456 / CCUG 17765 / NCTC 10094 / 16M).